We begin with the raw amino-acid sequence, 102 residues long: UPF0213 protein XCC3072 (102 aa).

Residues 5-80 (KPWHLYLLLC…KQQPRARKLA (76 aa)) enclose the GIY-YIG domain.

The protein belongs to the UPF0213 family.

This Xanthomonas campestris pv. campestris (strain ATCC 33913 / DSM 3586 / NCPPB 528 / LMG 568 / P 25) protein is UPF0213 protein XCC3072.